A 243-amino-acid polypeptide reads, in one-letter code: MIVIPAIDLKNGQCVRLRQGLMEDTTVFSDSPVEMAEQWVKQGARRVHLVDLNGAFEGRPVNVSSVTEVVSAFPDLPVQIGGGIRNMQIANAYIEAGIDYLIIGTMAVTNPEFVSELCREFPSKVIVGLDANDGLVATQGWTQQTDLNVVNLSKKFEQYGVSSIVYTDIARDGMMQGVNIEATVDLAKQTSIPIIASGGISNMEDIFGLLVEAHHGIMGAIIGRAIYEGTLDFKQAQQFCDAN.

Residue Asp8 is the Proton acceptor of the active site. Asp130 acts as the Proton donor in catalysis.

Belongs to the HisA/HisF family.

It localises to the cytoplasm. The enzyme catalyses 1-(5-phospho-beta-D-ribosyl)-5-[(5-phospho-beta-D-ribosylamino)methylideneamino]imidazole-4-carboxamide = 5-[(5-phospho-1-deoxy-D-ribulos-1-ylimino)methylamino]-1-(5-phospho-beta-D-ribosyl)imidazole-4-carboxamide. The protein operates within amino-acid biosynthesis; L-histidine biosynthesis; L-histidine from 5-phospho-alpha-D-ribose 1-diphosphate: step 4/9. The chain is 1-(5-phosphoribosyl)-5-[(5-phosphoribosylamino)methylideneamino] imidazole-4-carboxamide isomerase from Ruthia magnifica subsp. Calyptogena magnifica.